Consider the following 488-residue polypeptide: Glutamyl-tRNA(Gln) amidotransferase subunit A (488 aa).

Residues K78 and S153 each act as charge relay system in the active site. Catalysis depends on S177, which acts as the Acyl-ester intermediate.

This sequence belongs to the amidase family. GatA subfamily. Heterotrimer of A, B and C subunits.

It carries out the reaction L-glutamyl-tRNA(Gln) + L-glutamine + ATP + H2O = L-glutaminyl-tRNA(Gln) + L-glutamate + ADP + phosphate + H(+). Allows the formation of correctly charged Gln-tRNA(Gln) through the transamidation of misacylated Glu-tRNA(Gln) in organisms which lack glutaminyl-tRNA synthetase. The reaction takes place in the presence of glutamine and ATP through an activated gamma-phospho-Glu-tRNA(Gln). The sequence is that of Glutamyl-tRNA(Gln) amidotransferase subunit A from Thermoanaerobacter pseudethanolicus (strain ATCC 33223 / 39E) (Clostridium thermohydrosulfuricum).